A 220-amino-acid chain; its full sequence is Probable septum site-determining protein MinC (220 aa).

Belongs to the MinC family. As to quaternary structure, interacts with MinD and FtsZ.

Cell division inhibitor that blocks the formation of polar Z ring septums. Rapidly oscillates between the poles of the cell to destabilize FtsZ filaments that have formed before they mature into polar Z rings. Prevents FtsZ polymerization. This is Probable septum site-determining protein MinC from Vibrio vulnificus (strain CMCP6).